The chain runs to 299 residues: MDNHIKGALLVCLAATMWGFDGIALTPRLFSLHVPFVVFILHLLPLILMSILFGKEEVKNIKKLQKNDLFFFFCVALFGGCLGTLCIVKALFLVNFKHLTVVTLLQKLQPIFAIILARLLLKEKLKRAYLFWGFLALLGGYLLTFEFHLPEFVSSDNLLPASLYSLLAAFSFGSATVFGKRILKSASFRTALYLRYLMTSCIMFVIVTFTSGFGDFLVATAGNWLIFVIIALTTGSGAILLYYFGLRYITAKVATMCELCFPISSVVFDYLINGNVLSPVQIASAILMIISIIKISKLN.

EamA domains lie at 6-144 (KGAL…YLLT) and 162-294 (SLYS…SIIK). The next 10 helical transmembrane spans lie at 7-27 (GALL…ALTP), 34-54 (VPFV…ILFG), 68-88 (DLFF…LCIV), 101-121 (VVTL…RLLL), 129-149 (YLFW…EFHL), 158-178 (LLPA…ATVF), 202-222 (IMFV…ATAG), 224-244 (WLIF…LYYF), 253-273 (VATM…YLIN), and 276-296 (VLSP…IKIS).

It belongs to the EamA transporter family.

Its subcellular location is the cell membrane. Functionally, transports riboflavin into the cell. This Fusobacterium nucleatum subsp. nucleatum (strain ATCC 23726 / VPI 4351) protein is Riboflavin transporter ImpX.